We begin with the raw amino-acid sequence, 153 residues long: Histone H2B.10 (153 aa).

2 stretches are compositionally biased toward basic and acidic residues: residues 1 to 28 and 36 to 53; these read MAPK…EKAP and EKRL…EGKK. The disordered stretch occupies residues 1–61; it reads MAPKAEKKPA…KKAGRKKAKK (61 aa). Lysine 7 and lysine 37 each carry N6-acetyllysine. A Glycyl lysine isopeptide (Lys-Gly) (interchain with G-Cter in ubiquitin) cross-link involves residue lysine 149.

It belongs to the histone H2B family. In terms of assembly, the nucleosome is a histone octamer containing two molecules each of H2A, H2B, H3 and H4 assembled in one H3-H4 heterotetramer and two H2A-H2B heterodimers. The octamer wraps approximately 147 bp of DNA. In terms of processing, can be acetylated to form H2BK6ac and H2BK33ac. Monoubiquitinated by BRE1 to form H2BK143ub1 and deubiquitinated by UBP26. Required for heterochromatic histone H3 di- and trimethylation at H3K4me. May give a specific tag for epigenetic transcriptional activation.

It is found in the nucleus. The protein localises to the chromosome. Its function is as follows. Core component of nucleosome. Nucleosomes wrap and compact DNA into chromatin, limiting DNA accessibility to the cellular machineries which require DNA as a template. Histones thereby play a central role in transcription regulation, DNA repair, DNA replication and chromosomal stability. DNA accessibility is regulated via a complex set of post-translational modifications of histones, also called histone code, and nucleosome remodeling. This is Histone H2B.10 (H2B.10) from Oryza sativa subsp. indica (Rice).